Consider the following 180-residue polypeptide: NAD(P)H-quinone oxidoreductase subunit I, chloroplastic (180 aa).

2 4Fe-4S ferredoxin-type domains span residues 55–84 (GRIH…VNWR) and 95–124 (LNYS…MTEE). C64, C67, C70, C74, C104, C107, C110, and C114 together coordinate [4Fe-4S] cluster.

This sequence belongs to the complex I 23 kDa subunit family. As to quaternary structure, NDH is composed of at least 16 different subunits, 5 of which are encoded in the nucleus. [4Fe-4S] cluster is required as a cofactor.

It localises to the plastid. Its subcellular location is the chloroplast thylakoid membrane. It catalyses the reaction a plastoquinone + NADH + (n+1) H(+)(in) = a plastoquinol + NAD(+) + n H(+)(out). It carries out the reaction a plastoquinone + NADPH + (n+1) H(+)(in) = a plastoquinol + NADP(+) + n H(+)(out). In terms of biological role, NDH shuttles electrons from NAD(P)H:plastoquinone, via FMN and iron-sulfur (Fe-S) centers, to quinones in the photosynthetic chain and possibly in a chloroplast respiratory chain. The immediate electron acceptor for the enzyme in this species is believed to be plastoquinone. Couples the redox reaction to proton translocation, and thus conserves the redox energy in a proton gradient. This Platanus occidentalis (Sycamore) protein is NAD(P)H-quinone oxidoreductase subunit I, chloroplastic.